The primary structure comprises 516 residues: Adenine DNA glycosylase (516 aa).

A compositionally biased stretch (basic residues) spans M1 to K23. A disordered region spans residues M1–G38. E105 functions as the Proton donor/acceptor in the catalytic mechanism. [4Fe-4S] cluster contacts are provided by C261, C268, C271, and C277. The 133-residue stretch at P335 to E467 folds into the Nudix hydrolase domain. The Nudix box motif lies at V376–A398. The disordered stretch occupies residues C474–Q516.

The protein belongs to the Nth/MutY family. The cofactor is [4Fe-4S] cluster. As to expression, expressed in brain, spleen, heart, liver and kidney.

Its subcellular location is the nucleus. It is found in the mitochondrion. It carries out the reaction Hydrolyzes free adenine bases from 7,8-dihydro-8-oxoguanine:adenine mismatched double-stranded DNA, leaving an apurinic site.. Functionally, involved in oxidative DNA damage repair. Initiates repair of A*oxoG to C*G by removing the inappropriately paired adenine base from the DNA backbone. Possesses both adenine and 2-OH-A DNA glycosylase activities. This is Adenine DNA glycosylase (Mutyh) from Rattus norvegicus (Rat).